Here is a 547-residue protein sequence, read N- to C-terminus: Glucose-6-phosphate isomerase (547 aa).

Residue Glu-355 is the Proton donor of the active site. Active-site residues include His-386 and Lys-512.

Belongs to the GPI family.

It is found in the cytoplasm. It carries out the reaction alpha-D-glucose 6-phosphate = beta-D-fructose 6-phosphate. It functions in the pathway carbohydrate biosynthesis; gluconeogenesis. The protein operates within carbohydrate degradation; glycolysis; D-glyceraldehyde 3-phosphate and glycerone phosphate from D-glucose: step 2/4. Functionally, catalyzes the reversible isomerization of glucose-6-phosphate to fructose-6-phosphate. The polypeptide is Glucose-6-phosphate isomerase (Corynebacterium diphtheriae (strain ATCC 700971 / NCTC 13129 / Biotype gravis)).